The primary structure comprises 130 residues: Small ribosomal subunit protein uS11 (130 aa).

The protein belongs to the universal ribosomal protein uS11 family. Part of the 30S ribosomal subunit. Interacts with proteins S7 and S18. Binds to IF-3.

Located on the platform of the 30S subunit, it bridges several disparate RNA helices of the 16S rRNA. Forms part of the Shine-Dalgarno cleft in the 70S ribosome. This is Small ribosomal subunit protein uS11 from Prochlorococcus marinus subsp. pastoris (strain CCMP1986 / NIES-2087 / MED4).